The sequence spans 387 residues: Succinate--CoA ligase [ADP-forming] subunit beta (387 aa).

The 228-residue stretch at 9 to 236 (KELFAKHNVP…RAATDPLELK (228 aa)) folds into the ATP-grasp domain. ATP is bound by residues K45, 52-54 (GRG), S94, and E99. Positions 191 and 205 each coordinate Mg(2+). Residues N256 and 318 to 320 (GIT) each bind substrate.

Belongs to the succinate/malate CoA ligase beta subunit family. As to quaternary structure, heterotetramer of two alpha and two beta subunits. Mg(2+) is required as a cofactor.

It catalyses the reaction succinate + ATP + CoA = succinyl-CoA + ADP + phosphate. The catalysed reaction is GTP + succinate + CoA = succinyl-CoA + GDP + phosphate. It functions in the pathway carbohydrate metabolism; tricarboxylic acid cycle; succinate from succinyl-CoA (ligase route): step 1/1. Succinyl-CoA synthetase functions in the citric acid cycle (TCA), coupling the hydrolysis of succinyl-CoA to the synthesis of either ATP or GTP and thus represents the only step of substrate-level phosphorylation in the TCA. The beta subunit provides nucleotide specificity of the enzyme and binds the substrate succinate, while the binding sites for coenzyme A and phosphate are found in the alpha subunit. The chain is Succinate--CoA ligase [ADP-forming] subunit beta from Mycobacterium marinum (strain ATCC BAA-535 / M).